The following is a 92-amino-acid chain: Small ribosomal subunit protein uS19 (92 aa).

The protein belongs to the universal ribosomal protein uS19 family.

Functionally, protein S19 forms a complex with S13 that binds strongly to the 16S ribosomal RNA. The chain is Small ribosomal subunit protein uS19 from Parvibaculum lavamentivorans (strain DS-1 / DSM 13023 / NCIMB 13966).